The sequence spans 467 residues: Plasma alpha-L-fucosidase (467 aa).

Residues 1–28 (MRPQELPRLAFPLLLLLLLLLPPPPCPA) form the signal peptide. Residues asparagine 171 and asparagine 239 are each glycosylated (N-linked (GlcNAc...) asparagine). Position 301 is a phosphoserine; by FAM20C (serine 301). The N-linked (GlcNAc...) asparagine glycan is linked to asparagine 377.

It belongs to the glycosyl hydrolase 29 family. As to quaternary structure, homotetramer.

It localises to the secreted. It catalyses the reaction an alpha-L-fucoside + H2O = L-fucose + an alcohol. Alpha-L-fucosidase is responsible for hydrolyzing the alpha-1,6-linked fucose joined to the reducing-end N-acetylglucosamine of the carbohydrate moieties of glycoproteins. This is Plasma alpha-L-fucosidase (FUCA2) from Homo sapiens (Human).